Reading from the N-terminus, the 148-residue chain is MSGSKSPRGEFAGRKLRLKRKWCRWHDYNYVRRVLKLKEKYDPLEGAPMARGIVIEKVGLEAKQPNSAIRKCVRVQLIKNGRVVTAFCPGNHAINFIDEHDEVIIEGIGGPKGPRAKGDIPGVKYKVIMVGRNSLRELVRGRQEKIKR.

Belongs to the universal ribosomal protein uS12 family. Part of the 30S ribosomal subunit.

Functionally, with S4 and S5 plays an important role in translational accuracy. Located at the interface of the 30S and 50S subunits. This Methanocaldococcus jannaschii (strain ATCC 43067 / DSM 2661 / JAL-1 / JCM 10045 / NBRC 100440) (Methanococcus jannaschii) protein is Small ribosomal subunit protein uS12.